The sequence spans 874 residues: Coatomer subunit gamma-1 (874 aa).

Basic and acidic residues predominate over residues 1–11; it reads MLKKFDKKDEE. Positions 1–21 are disordered; it reads MLKKFDKKDEESGGGSNPLQH. HEAT repeat units lie at residues 64-101, 283-320, 322-355, and 356-392; these read TEAT…IAED, KELA…KHPS, VTAC…GSES, and SIDR…KYPR. Threonine 594 bears the Phosphothreonine mark. The segment at 609–874 is interaction with ZNF289/ARFGAP2; sequence RQEIFQEQLA…PVDIILASVG (266 aa).

It belongs to the COPG family. Oligomeric complex that consists of at least the alpha, beta, beta', gamma, delta, epsilon and zeta subunits. Interacts with ZNF289/ARFGAP2 through its C-terminal appendage domain. Interacts with EGFR upon EGF treatment; interaction is essential for regulation of EGF-dependent nuclear transport of EGFR by retrograde trafficking from the Golgi to the ER. The coatomer interacts with KDEL receptors; the interaction is important for retrograde trafficking of KDEL-bearing proteins from the Golgi to the endoplasmic reticulum. Interacts with COPB1. Interacts with TMED10 (via C-terminus). Interacts with TMED2, TMED3, TMED7 and TMED9.

It localises to the cytoplasm. The protein resides in the cytosol. The protein localises to the golgi apparatus membrane. It is found in the cytoplasmic vesicle. Its subcellular location is the COPI-coated vesicle membrane. Its function is as follows. The coatomer is a cytosolic protein complex that binds to dilysine motifs and reversibly associates with Golgi non-clathrin-coated vesicles, which further mediate biosynthetic protein transport from the ER, via the Golgi up to the trans Golgi network. Coatomer complex is required for budding from Golgi membranes, and is essential for the retrograde Golgi-to-ER transport of dilysine-tagged proteins. In mammals, the coatomer can only be recruited by membranes associated to ADP-ribosylation factors (ARFs), which are small GTP-binding proteins; the complex also influences the Golgi structural integrity, as well as the processing, activity, and endocytic recycling of LDL receptors. Required for limiting lipid storage in lipid droplets. Involved in lipid homeostasis by regulating the presence of perilipin family members PLIN2 and PLIN3 at the lipid droplet surface and promoting the association of adipocyte triglyceride lipase (PNPLA2) with the lipid droplet surface to mediate lipolysis. This chain is Coatomer subunit gamma-1 (Copg1), found in Mus musculus (Mouse).